A 392-amino-acid polypeptide reads, in one-letter code: Formate-dependent phosphoribosylglycinamide formyltransferase (392 aa).

Residues 22–23 (EL) and glutamate 82 each bind N(1)-(5-phospho-beta-D-ribosyl)glycinamide. Residues arginine 114, lysine 155, 160–165 (SSGKGQ), 195–198 (EGVV), and glutamate 203 contribute to the ATP site. The 190-residue stretch at 119 to 308 (RLAAEELQLP…EFALHVRAFL (190 aa)) folds into the ATP-grasp domain. Mg(2+)-binding residues include glutamate 267 and glutamate 279. Residues aspartate 286, lysine 355, and 362–363 (RR) each bind N(1)-(5-phospho-beta-D-ribosyl)glycinamide.

This sequence belongs to the PurK/PurT family. In terms of assembly, homodimer.

It carries out the reaction N(1)-(5-phospho-beta-D-ribosyl)glycinamide + formate + ATP = N(2)-formyl-N(1)-(5-phospho-beta-D-ribosyl)glycinamide + ADP + phosphate + H(+). The protein operates within purine metabolism; IMP biosynthesis via de novo pathway; N(2)-formyl-N(1)-(5-phospho-D-ribosyl)glycinamide from N(1)-(5-phospho-D-ribosyl)glycinamide (formate route): step 1/1. In terms of biological role, involved in the de novo purine biosynthesis. Catalyzes the transfer of formate to 5-phospho-ribosyl-glycinamide (GAR), producing 5-phospho-ribosyl-N-formylglycinamide (FGAR). Formate is provided by PurU via hydrolysis of 10-formyl-tetrahydrofolate. This chain is Formate-dependent phosphoribosylglycinamide formyltransferase, found in Klebsiella pneumoniae (strain 342).